The primary structure comprises 144 residues: Dynein light chain Tctex-type protein 2B (144 aa).

This sequence belongs to the dynein light chain Tctex-type family. Light chain of the cytoplasmic dynein complex 2, a multisubunit complex composed at least of eleven different proteins. The cytoplasmic dynein 2 complex consists of two catalytic heavy chains (HCs) and a number of non-catalytic subunits presented by intermediate chains (ICs), light intermediate chains (LICs) and light chains (LCs). Among them, a heavy chain (DYNC2H1), two intermediate chains (DYNC2I2 and DYNC2I1), a light intermediate chain (DYNC2LI1), and a light chain (DYNLT2B) are unique to the dynein-2 complex, but a subset of the light chains are also shared by dynein-1 and dynein-2 complexes. The dimer DYNLT2B-DYNLT1/DYNLT3 interacts with DYNC2I1; this interaction is crucial for retrograde trafficking of ciliary proteins.

The protein localises to the dynein axonemal particle. Acts as one of several non-catalytic accessory components of the cytoplasmic dynein 2 complex (dynein-2 complex), a motor protein complex that drives the movement of cargos along microtubules within cilia and flagella in concert with the intraflagellar transport (IFT) system. Required for proper retrograde ciliary transport. The sequence is that of Dynein light chain Tctex-type protein 2B (Dynlt2b) from Mus musculus (Mouse).